A 60-amino-acid polypeptide reads, in one-letter code: Small integral membrane protein 3 (60 aa).

The helical transmembrane segment at 20 to 40 threads the bilayer; sequence IWVIVLIILATIVIMTSLLLC.

It localises to the membrane. This chain is Small integral membrane protein 3 (SMIM3), found in Homo sapiens (Human).